The following is a 249-amino-acid chain: Photosystem I-associated linker protein CpcL (249 aa).

Residues 11-189 (VSQNQRVTNY…PRYGADHREK (179 aa)) form the PBS-linker domain. The helical transmembrane segment at 223 to 247 (VVLYVGGALVSLGIIAVALSAWGII) threads the bilayer.

This sequence belongs to the phycobilisome linker protein family. As to quaternary structure, part of a specialized phycobilisome (PBS), a structure that is usually composed of two distinct substructures: a core complex and a number of rods radiating from the core. This protein is part of a core-less PBS rod (called CpcL-PBS) with on average 5 stacked phycocyanin hexamers (PC, CpcA and CpcB). Linker CpcL connects the PC stack to the thylakoid, the hexamers are linked by 1 copy of CpcC1, 3 copies of CpcC2 and the stack is terminated by a single copy of CpcD. Ferredoxin--NADP reductase (petH) is also part of the complex. CpcL-PBS has no central core proteins (allophycocyanin ApcA, ApcB) nor phycobiliprotein ApcE.

The protein localises to the cellular thylakoid membrane. Functionally, rod linker protein, associated with phycocyanin. Linker polypeptides determine the state of aggregation and the location of the disk-shaped phycobiliprotein units within the phycobilisome and modulate their spectroscopic properties in order to mediate a directed and optimal energy transfer. Plays a role in energy transfer from the phycobilisome to photosystem I (PSI). Although able to transfer energy to both photosystems, this is predominantly a PSI antenna. The chain is Photosystem I-associated linker protein CpcL from Synechocystis sp. (strain ATCC 27184 / PCC 6803 / Kazusa).